The sequence spans 158 residues: tRNA (cytidine(34)-2'-O)-methyltransferase (158 aa).

Positions 103, 123, and 131 each coordinate S-adenosyl-L-methionine.

It belongs to the class IV-like SAM-binding methyltransferase superfamily. RNA methyltransferase TrmH family. TrmL subfamily. Homodimer.

The protein resides in the cytoplasm. It carries out the reaction cytidine(34) in tRNA + S-adenosyl-L-methionine = 2'-O-methylcytidine(34) in tRNA + S-adenosyl-L-homocysteine + H(+). It catalyses the reaction 5-carboxymethylaminomethyluridine(34) in tRNA(Leu) + S-adenosyl-L-methionine = 5-carboxymethylaminomethyl-2'-O-methyluridine(34) in tRNA(Leu) + S-adenosyl-L-homocysteine + H(+). Functionally, methylates the ribose at the nucleotide 34 wobble position in the two leucyl isoacceptors tRNA(Leu)(CmAA) and tRNA(Leu)(cmnm5UmAA). Catalyzes the methyl transfer from S-adenosyl-L-methionine to the 2'-OH of the wobble nucleotide. The protein is tRNA (cytidine(34)-2'-O)-methyltransferase of Ancylobacter novellus (strain ATCC 8093 / DSM 506 / JCM 20403 / CCM 1077 / IAM 12100 / NBRC 12443 / NCIMB 10456) (Starkeya novella).